The following is an 874-amino-acid chain: Mannuronan C5-epimerase AlgE6 (874 aa).

PbH1 repeat units follow at residues 133–155 (DRNVTIERVEVREMSGYGFDPHE), 157–179 (TINLVLRDSVAHHNGLDGFVADY), 180–202 (QIGGTFENNVAYANDRHGFNIVT), 204–226 (TNDFVMRNNVAYGNGGNGLVVQR), 234–256 (PENILIDGGSYYDNGLEGVLVKM), 257–279 (SNNVTVQNADIHGNGSSGVRVYG), 280–302 (AQGVQILGNQIHDNAKTAVAPEV), and 320–351 (TLNTRVEGNTITGSANSTYGVQERNDGTDFSS). Hemolysin-type calcium-binding repeat units follow at residues 383–394 (GTDGNDVLIGSD), 401–417 (GGAGDDRLDGGAGDDLL), 419–435 (GGAGRDRLTGGLGADTF), 562–578 (GGGGADQLYGYGGGDLL), 580–596 (GGAGRDRLTGGEGADTF), 723–739 (GGGGADQLYGYAGNDLL), and 741–757 (GGAGRDKLSGGEGADTF). A disordered region spans residues 401-420 (GGAGDDRLDGGAGDDLLDGG).

The protein belongs to the D-mannuronate C5-epimerase family. Ca(2+) serves as cofactor.

Its subcellular location is the secreted. It catalyses the reaction [(1-&gt;4)-beta-D-mannuronosyl](n) = [alginate](n). It functions in the pathway glycan biosynthesis; alginate biosynthesis. Its activity is regulated as follows. Inhibited by zinc. Functionally, converts beta-D-mannuronic acid (M) to alpha-L-guluronic acid (G), producing a polymer with gel-forming capacity, required for the formation of the cyst coat. In Azotobacter vinelandii, this protein is Mannuronan C5-epimerase AlgE6.